Consider the following 841-residue polypeptide: Translation initiation factor IF-2 (841 aa).

Positions 94-258 (QRSPEEIEAE…HGFQSPTGPV (165 aa)) are disordered. The span at 96 to 136 (SPEEIEAERKRELEERRAVENAARQKAEEEAKRRAEEEARR) shows a compositional bias: basic and acidic residues. The span at 137 to 173 (QPAAAQPAGTEAVAAPVAPVEAVREAAPVAAAPAPAA) shows a compositional bias: low complexity. Composition is skewed to basic and acidic residues over residues 174–194 (DARK…DNNR), 200–217 (DGER…EKAP), and 225–234 (TTDEESDGFR). A compositionally biased stretch (basic residues) spans 235-248 (RGGRGKAKLKKRNA). The 170-residue stretch at 341 to 510 (SRAPVVTVMG…LLQAEVLELK (170 aa)) folds into the tr-type G domain. The tract at residues 350–357 (GHVDHGKT) is G1. GTP is bound at residue 350–357 (GHVDHGKT). The interval 375–379 (GITQH) is G2. The interval 396–399 (DTPG) is G3. GTP-binding positions include 396 to 400 (DTPGH) and 450 to 453 (NKID). Residues 450–453 (NKID) are G4. The G5 stretch occupies residues 486 to 488 (SAK).

It belongs to the TRAFAC class translation factor GTPase superfamily. Classic translation factor GTPase family. IF-2 subfamily.

Its subcellular location is the cytoplasm. Functionally, one of the essential components for the initiation of protein synthesis. Protects formylmethionyl-tRNA from spontaneous hydrolysis and promotes its binding to the 30S ribosomal subunits. Also involved in the hydrolysis of GTP during the formation of the 70S ribosomal complex. This chain is Translation initiation factor IF-2, found in Pseudomonas fluorescens (strain SBW25).